Consider the following 269-residue polypeptide: Protein MrkE (269 aa).

Positions 59-173 (KVIIVEDEFL…RIINMLQKLT (115 aa)) constitute a Response regulatory domain. Asp110 carries the post-translational modification 4-aspartylphosphate. Residues 197 to 269 (INLIKDERII…VAQVSIANRF (73 aa)) enclose the HTH LytTR-type domain.

Its function is as follows. May be involved in the regulation of fimbrial expression. This chain is Protein MrkE (mrkE), found in Klebsiella pneumoniae.